Here is a 248-residue protein sequence, read N- to C-terminus: Cytochrome c oxidase subunit 2 (248 aa).

The N-terminal stretch at 1–12 (MLLMNLFTIINN) is a signal peptide. Residues 13–39 (DVPTPYNMYFQDSTTPHQEGILELHDN) lie on the Mitochondrial intermembrane side of the membrane. The helical transmembrane segment at 40-61 (IMFYMLTVLGLVSWMMIIIIKD) threads the bilayer. Over 62-79 (YKNNPITYKYIKHGQMIE) the chain is Mitochondrial matrix. A helical transmembrane segment spans residues 80-104 (IIWTILPAIILLMIAFPSFILLYLC). Residues 105–248 (DEVISPAMTI…PTFLTWLNEQ (144 aa)) are Mitochondrial intermembrane-facing. Cu cation-binding residues include H183, C218, E220, C222, H226, and M229. E220 serves as a coordination point for Mg(2+).

The protein belongs to the cytochrome c oxidase subunit 2 family. In terms of assembly, component of the cytochrome c oxidase (complex IV, CIV), a multisubunit enzyme composed of a catalytic core of 3 subunits and several supernumerary subunits. The complex exists as a monomer or a dimer and forms supercomplexes (SCs) in the inner mitochondrial membrane with ubiquinol-cytochrome c oxidoreductase (cytochrome b-c1 complex, complex III, CIII). Requires Cu cation as cofactor. The signal sequence of COX2 is processed by IMP1.

Its subcellular location is the mitochondrion inner membrane. It carries out the reaction 4 Fe(II)-[cytochrome c] + O2 + 8 H(+)(in) = 4 Fe(III)-[cytochrome c] + 2 H2O + 4 H(+)(out). In terms of biological role, component of the cytochrome c oxidase, the last enzyme in the mitochondrial electron transport chain which drives oxidative phosphorylation. The respiratory chain contains 3 multisubunit complexes succinate dehydrogenase (complex II, CII), ubiquinol-cytochrome c oxidoreductase (cytochrome b-c1 complex, complex III, CIII) and cytochrome c oxidase (complex IV, CIV), that cooperate to transfer electrons derived from NADH and succinate to molecular oxygen, creating an electrochemical gradient over the inner membrane that drives transmembrane transport and the ATP synthase. Cytochrome c oxidase is the component of the respiratory chain that catalyzes the reduction of oxygen to water. Electrons originating from reduced cytochrome c in the intermembrane space (IMS) are transferred via the dinuclear copper A center (CU(A)) of subunit 2 and heme A of subunit 1 to the active site in subunit 1, a binuclear center (BNC) formed by heme A3 and copper B (CU(B)). The BNC reduces molecular oxygen to 2 water molecules using 4 electrons from cytochrome c in the IMS and 4 protons from the mitochondrial matrix. This is Cytochrome c oxidase subunit 2 (COX2) from Eremothecium gossypii (strain ATCC 10895 / CBS 109.51 / FGSC 9923 / NRRL Y-1056) (Yeast).